The sequence spans 726 residues: Transcription factor 12 (726 aa).

Disordered regions lie at residues 27-75, 89-223, 243-267, 289-309, 345-367, 380-409, 501-532, 558-624, and 694-726; these read SPPV…SRGF, LVSH…TFFD, YGGM…HSHD, SSFH…HTPP, PDHT…SPLA, TASG…YENS, MGSV…SSEL, VENQ…ERRM, and EEEK…MGHL. The span at 29–47 shows a compositional bias: polar residues; the sequence is PVNSGKNRPTTLGSSQFTA. Over residues 55–74 the composition is skewed to low complexity; the sequence is SQASWASGGQSSPSFESSRG. Polar residues-rich tracts occupy residues 145–157, 249–263, and 291–309; these read PGKS…SYTG, GSSS…YSNL, and FHRS…HTPP. The segment covering 348–359 has biased composition (low complexity); sequence TSSSFPSNPSTP. 2 stretches are compositionally biased toward polar residues: residues 389-409 and 510-532; these read GTTQ…YENS and GSLN…SSEL. Over residues 559–575 the composition is skewed to basic and acidic residues; sequence ENQDKDDMHDSHASDDL. Residues 592–603 are compositionally biased toward low complexity; the sequence is SSRPSCELSCSS. Residues 612–624 show a composition bias toward basic and acidic residues; the sequence is PEQKAERERERRM. One can recognise a bHLH domain in the interval 621 to 674; it reads ERRMANNARERLRVRDINEAFKELGRMCQLHLKSEKPQTKLLILHQAVAVILSL. A class A specific domain region spans residues 676 to 699; sequence QQVRERNLNPKAACLKRREEEKVS. Residues 717 to 726 show a composition bias toward polar residues; it reads TDTSNPMGHL.

In terms of assembly, efficient DNA binding requires dimerization with another bHLH protein.

The protein localises to the nucleus. In terms of biological role, transcriptional regulator. Involved in the initiation of neuronal differentiation. Activates transcription by binding to the E box (5'-CANNTG-3'). May be involved in the functional network that regulates the development of the GnRH axis. The protein is Transcription factor 12 (tcf12) of Danio rerio (Zebrafish).